A 269-amino-acid polypeptide reads, in one-letter code: Diaminopimelate epimerase (269 aa).

The substrate site is built by Asn15 and Asn66. The active-site Proton donor is the Cys75. Residues 76–77, Asn152, Asn185, and 203–204 contribute to the substrate site; these read GN and ER. The Proton acceptor role is filled by Cys212. 213–214 lines the substrate pocket; that stretch reads GT.

This sequence belongs to the diaminopimelate epimerase family. In terms of assembly, homodimer.

Its subcellular location is the cytoplasm. It carries out the reaction (2S,6S)-2,6-diaminopimelate = meso-2,6-diaminopimelate. The protein operates within amino-acid biosynthesis; L-lysine biosynthesis via DAP pathway; DL-2,6-diaminopimelate from LL-2,6-diaminopimelate: step 1/1. In terms of biological role, catalyzes the stereoinversion of LL-2,6-diaminopimelate (L,L-DAP) to meso-diaminopimelate (meso-DAP), a precursor of L-lysine and an essential component of the bacterial peptidoglycan. This chain is Diaminopimelate epimerase, found in Parabacteroides distasonis (strain ATCC 8503 / DSM 20701 / CIP 104284 / JCM 5825 / NCTC 11152).